The chain runs to 449 residues: MQDVIKKIEDYSSRNGIMLPNPVTEYVAGIAEEEKLKDPELHDLVRLFSRICERNRGLEGEELLKAVEDEYLRILKVRELVKRKRAKFPPRLIEEIAEAIKRHGLSDDELDELVRGVRRAYERAMVEAGEAVGTVAAQSVGEPGTQMTMRTFHYAGVAELNVTLGLPRLIEIVDARKKISTPTMSIYFEGDRKYDEEFVRKKANKICKSTLNDVLKNFSIQYADMSVEAELDEEKIREKHLEYDDIIAKVEKTFKKVEIDNNILRFEPPKPTIRELRLLADKVRKLQISGVKNIGKVVIRKEDDEWVIHTEGSNLGDRFKEEGVDKVRTTTNDIHEIETVLGIEAARNAIIHEAKRTMEEQGLTVDIRHIMLVADMMTADGSVKSIGRHGISGEKASVLARASFEETGKHLLRASIRGEVDHLTGIIENIIIGQPIPLGTGSVSVIMKK.

Residues 1–68 (MQDVIKKIED…EGEELLKAVE (68 aa)) are unknown. Residues 69 to 449 (DEYLRILKVR…TGSVSVIMKK (381 aa)) are DNA-directed RNA polymerase subunit Rpo1C.

This sequence belongs to the RNA polymerase beta' chain family. In terms of assembly, part of the RNA polymerase complex.

The protein localises to the cytoplasm. It carries out the reaction RNA(n) + a ribonucleoside 5'-triphosphate = RNA(n+1) + diphosphate. Functionally, DNA-dependent RNA polymerase (RNAP) catalyzes the transcription of DNA into RNA using the four ribonucleoside triphosphates as substrates. Forms part of the jaw domain. This Methanothermobacter thermautotrophicus (strain Winter) (Methanobacterium thermoautotrophicum) protein is DNA-directed RNA polymerase subunit Rpo1C.